Consider the following 606-residue polypeptide: NADH-ubiquinone oxidoreductase chain 5 (606 aa).

16 consecutive transmembrane segments (helical) span residues 1 to 21, 38 to 58, 87 to 107, 114 to 134, 140 to 160, 171 to 191, 213 to 233, 241 to 261, 273 to 293, 301 to 320, 325 to 347, 366 to 386, 409 to 429, 457 to 477, 488 to 508, and 582 to 602; these read MNIF…PIIA, NIIS…IYSG, MIFV…SIWY, ITQF…LVTA, LFIG…WWYG, AILY…WFLS, LMGL…HPWL, TPVS…FLLI, AQTL…ICAL, IIAF…IGIN, AFLH…GSII, MPFT…MPFL, LLMT…MIFF, LLIG…PTTT, LMAL…SLAT, and GLIK…LLLL.

This sequence belongs to the complex I subunit 5 family. Core subunit of respiratory chain NADH dehydrogenase (Complex I) which is composed of 45 different subunits.

It is found in the mitochondrion inner membrane. It carries out the reaction a ubiquinone + NADH + 5 H(+)(in) = a ubiquinol + NAD(+) + 4 H(+)(out). Its function is as follows. Core subunit of the mitochondrial membrane respiratory chain NADH dehydrogenase (Complex I) which catalyzes electron transfer from NADH through the respiratory chain, using ubiquinone as an electron acceptor. Essential for the catalytic activity and assembly of complex I. This chain is NADH-ubiquinone oxidoreductase chain 5 (MT-ND5), found in Rhinoceros unicornis (Greater Indian rhinoceros).